The chain runs to 593 residues: Meiosis-specific APC/C activator protein AMA1 (593 aa).

The segment covering 1–11 has biased composition (basic residues); the sequence is MATPHLYHRYN. Residues 1 to 26 form a disordered region; the sequence is MATPHLYHRYNSKSSNKNINSSGNST. Over residues 12-25 the composition is skewed to low complexity; it reads SKSSNKNINSSGNS. The C-box motif lies at 29 to 35; the sequence is DRFIPKS. Residues 94-109 are compositionally biased toward low complexity; the sequence is SSISSSSESQVTRSGS. Residues 94-125 form a disordered region; the sequence is SSISSSSESQVTRSGSARASRNDYSKLTKEQK. Residues 113-125 are compositionally biased toward basic and acidic residues; sequence SRNDYSKLTKEQK. WD repeat units lie at residues 226–264, 271–310, 323–364, 388–427, 432–474, and 525–564; these read RNDF…VSIL, EKRD…HSSN, ESFK…FPIK, AQAQ…KPIK, PHKA…LLDE, and PNPL…EEII.

Belongs to the WD repeat CDC20/Fizzy family. Interacts with CDC16.

Activator protein that regulates the ubiquitin ligase activity and substrate specificity of the anaphase promoting complex/cyclosome (APC/C). Required for the ubiquitination and subsequent degradation of the B-type cyclin CLB1 by the APC/C complex during meiosis. Required for meiosis I, late meiotic gene expression and spore wall assembly. In Saccharomyces cerevisiae (strain ATCC 204508 / S288c) (Baker's yeast), this protein is Meiosis-specific APC/C activator protein AMA1 (AMA1).